The primary structure comprises 289 residues: Acetyl-coenzyme A carboxylase carboxyl transferase subunit beta (289 aa).

The CoA carboxyltransferase N-terminal domain occupies 28–289; the sequence is VMTKCPKCKK…QGGEMAVWQS (262 aa). Residues Cys32, Cys35, Cys51, and Cys54 each contribute to the Zn(2+) site. The segment at 32–54 adopts a C4-type zinc-finger fold; the sequence is CPKCKKIMYTKEVLKNLKVCVNC.

The protein belongs to the AccD/PCCB family. Acetyl-CoA carboxylase is a heterohexamer composed of biotin carboxyl carrier protein (AccB), biotin carboxylase (AccC) and two subunits each of ACCase subunit alpha (AccA) and ACCase subunit beta (AccD). Requires Zn(2+) as cofactor.

Its subcellular location is the cytoplasm. The catalysed reaction is N(6)-carboxybiotinyl-L-lysyl-[protein] + acetyl-CoA = N(6)-biotinyl-L-lysyl-[protein] + malonyl-CoA. Its pathway is lipid metabolism; malonyl-CoA biosynthesis; malonyl-CoA from acetyl-CoA: step 1/1. In terms of biological role, component of the acetyl coenzyme A carboxylase (ACC) complex. Biotin carboxylase (BC) catalyzes the carboxylation of biotin on its carrier protein (BCCP) and then the CO(2) group is transferred by the transcarboxylase to acetyl-CoA to form malonyl-CoA. The sequence is that of Acetyl-coenzyme A carboxylase carboxyl transferase subunit beta from Bacillus thuringiensis subsp. konkukian (strain 97-27).